The sequence spans 90 residues: Delta-aiptatoxin-Adi1a (90 aa).

The signal sequence occupies residues 1–21 (MKTAMLIAVLGFCAALCFVES). A propeptide spanning residues 22-44 (SHEEEREAAVYLTDLVSKAESAI) is cleaved from the precursor. 3 disulfide bridges follow: Cys50/Cys86, Cys52/Cys77, and Cys70/Cys87.

It belongs to the sea anemone sodium channel inhibitory toxin family.

It localises to the secreted. Its subcellular location is the nematocyst. Cardioactive peptide that acts on voltage-gated sodium channels (hNav1.5/SCN5A) and voltage-gated potassium channels (Kv). The activity on sodium channels consists of inhibition on sodium current inactivation with no significant effect on current activation. This effect may be caused by direct interaction of the toxin with sodium channel site-3. The activity on potassium channels consists of a significant increase of the amplitude of the transient component of the potassium current, shifting the current threshold to more negative membrane potentials. These effects are concentration-dependent and reversible and may be due to a direct interaction between the toxin and the voltage-sensing domain of the channel. Physiologically, this toxin increases the amplitude of cardiomyocyte contraction and slows the late phase of the twitch relaxation velocity with no induction of spontaneous twitching. It increases action potential duration of cardiomyocytes with no effect on its threshold and on the cell resting potential. On insects, it shows neurotoxic activity to the blowfly larvae S.falculaty, causing an immediate spasm that progressed to body contraction and paralysis. This chain is Delta-aiptatoxin-Adi1a, found in Exaiptasia diaphana (Tropical sea anemone).